The primary structure comprises 378 residues: Zinc transporter 7 (378 aa).

Residues 1 to 37 are Cytoplasmic-facing; the sequence is MLPLSIKDDEYKPPRLNLFRKMSGWFRSILADKTSRN. The chain crosses the membrane as a helical span at residues 38-58; sequence LFFFLCLNLSFAFVELLYGVW. The Lumenal portion of the chain corresponds to 59-67; the sequence is SNSLGLISD. Residues 68–88 traverse the membrane as a helical segment; it reads SFHMFFDCTALLAGLAASVIS. The Cytoplasmic portion of the chain corresponds to 89–102; it reads KWRSNDAFSYGYVR. A helical transmembrane segment spans residues 103-123; that stretch reads AEVLAGFVNGLFLIFTAFFIF. The Lumenal portion of the chain corresponds to 124 to 140; that stretch reads SEGVERALEPPDVHHER. The chain crosses the membrane as a helical span at residues 141–161; that stretch reads LLPVSILGFIVNLIGIFVFQH. Residues 161–223 form a his-rich loop region; that stretch reads HGGHGHSHGS…HGQDYCHDDH (63 aa). The Cytoplasmic segment spans residues 162-238; sequence GGHGHSHGSG…TGSSKQILQG (77 aa). A disordered region spans residues 185–214; the sequence is HGHSHRGHGHSHEHKHGHTHDHGHSHGLSH. Basic residues predominate over residues 186–211; sequence GHSHRGHGHSHEHKHGHTHDHGHSHG. Residues 239 to 259 traverse the membrane as a helical segment; the sequence is VFLHIVADTLGSIGVIISAIL. Over 260–264 the chain is Lumenal; sequence MQNYG. The chain crosses the membrane as a helical span at residues 265 to 285; sequence LMIADPICSMLIALLIGVSIV. Residues 286–378 lie on the Cytoplasmic side of the membrane; that stretch reads PLLKESIGIL…LYIQIDVAAM (93 aa).

The protein belongs to the cation diffusion facilitator (CDF) transporter (TC 2.A.4) family. SLC30A subfamily. In terms of assembly, homooligomer.

The protein localises to the golgi apparatus membrane. It localises to the cytoplasmic vesicle. It is found in the golgi apparatus. The protein resides in the trans-Golgi network. Its subcellular location is the sarcoplasmic reticulum. The protein localises to the mitochondrion. The enzyme catalyses Zn(2+)(in) = Zn(2+)(out). Zinc ion transporter mediating zinc entry from the cytosol into the lumen of organelles along the secretory pathway. By contributing to zinc ion homeostasis within the early secretory pathway, regulates the activation and folding of enzymes like alkaline phosphatases. This is Zinc transporter 7 (SLC30A7) from Gallus gallus (Chicken).